A 317-amino-acid chain; its full sequence is MVVMNSLRVILQASPGKLLWRKFQIPRFMPARPCSLYTCTYKTRNRALHPLWESVDLVPGGDRQSPINIRWRDSVYDPGLKPLTISYDPATCLHVWNNGYSFLVEFEDSTDKSVIKGGPLEHNYRLKQFHFHWGAIDAWGSEHTVDSKCFPAELHLVHWNAVRFENFEDAALEENGLAVIGVFLKLGKHHKELQKLVDTLPSIKHKDALVEFGSFDPSCLMPTCPDYWTYSGSLTTPPLSESVTWIIKKQPVEVDHDQLEQFRTLLFTSEGEKEKRMVDNFRPLQPLMNRTVRSSFRHDYVLNVQAKPKPATSQATP.

A mitochondrion-targeting transit peptide spans 1 to 33 (MVVMNSLRVILQASPGKLLWRKFQIPRFMPARP). The 260-residue stretch at 37-296 (YTCTYKTRNR…LMNRTVRSSF (260 aa)) folds into the Alpha-carbonic anhydrase domain. 3 residues coordinate Zn(2+): His-130, His-132, and His-155. A substrate-binding site is contributed by 235 to 236 (TT).

Belongs to the alpha-carbonic anhydrase family. Requires Zn(2+) as cofactor. In terms of tissue distribution, strongest expression in heart, pancreas, kidney, placenta, lung, and skeletal muscle. Not expressed in liver.

The protein resides in the mitochondrion. It carries out the reaction hydrogencarbonate + H(+) = CO2 + H2O. With respect to regulation, inhibited by coumarins, sulfonamide derivatives such as acetazolamide (AZA), saccharin and Foscarnet (phosphonoformate trisodium salt). Its function is as follows. Mitochondrial carbonic anhydrase that catalyzes the reversible conversion of carbon dioxide to bicarbonate/HCO3. This chain is Carbonic anhydrase 5B, mitochondrial (CA5B), found in Homo sapiens (Human).